A 166-amino-acid polypeptide reads, in one-letter code: Co-chaperone protein HscB homolog (166 aa).

The J domain occupies 3–75 (QYFTLFRIEP…IDRAAYLLKT (73 aa)).

The protein belongs to the HscB family. In terms of assembly, interacts with HscA and stimulates its ATPase activity.

In terms of biological role, co-chaperone involved in the maturation of iron-sulfur cluster-containing proteins. Seems to help targeting proteins to be folded toward HscA. The polypeptide is Co-chaperone protein HscB homolog (Neisseria meningitidis serogroup A / serotype 4A (strain DSM 15465 / Z2491)).